The primary structure comprises 236 residues: Small ribosomal subunit protein uS5 (236 aa).

The S5 DRBM domain occupies Glu-61–Ile-124.

It belongs to the universal ribosomal protein uS5 family. In terms of assembly, part of the 30S ribosomal subunit. Contacts protein S4.

With S4 and S12 plays an important role in translational accuracy. This Pyrococcus furiosus (strain ATCC 43587 / DSM 3638 / JCM 8422 / Vc1) protein is Small ribosomal subunit protein uS5.